The primary structure comprises 335 residues: uncharacterized protein (335 aa).

The interval G201–T236 is disordered. Basic and acidic residues predominate over residues R210 to N235.

Functionally, dispensable for normal development and fertility. This is an uncharacterized protein from Homo sapiens (Human).